A 589-amino-acid chain; its full sequence is V-type ATP synthase alpha chain (589 aa).

Position 239-246 (239-246 (GPFGAGKT)) interacts with ATP.

The protein belongs to the ATPase alpha/beta chains family.

The catalysed reaction is ATP + H2O + 4 H(+)(in) = ADP + phosphate + 5 H(+)(out). In terms of biological role, produces ATP from ADP in the presence of a proton gradient across the membrane. The V-type alpha chain is a catalytic subunit. This chain is V-type ATP synthase alpha chain, found in Treponema denticola (strain ATCC 35405 / DSM 14222 / CIP 103919 / JCM 8153 / KCTC 15104).